Reading from the N-terminus, the 273-residue chain is ATP synthase F(1) complex subunit gamma, mitochondrial (273 aa).

Position 14 is an N6-acetyllysine (Lys-14). Lys-24 carries the N6-succinyllysine modification. Lys-30 is subject to N6-acetyllysine. The residue at position 90 (Lys-90) is an N6-acetyllysine; alternate. Residue Lys-90 is modified to N6-succinyllysine; alternate. At Lys-113 the chain carries N6-acetyllysine. A Phosphoserine modification is found at Ser-121. An N6-acetyllysine; alternate modification is found at Lys-129. The residue at position 129 (Lys-129) is an N6-succinyllysine; alternate. N6-acetyllysine is present on Lys-172. Lys-245 is subject to N6-succinyllysine.

Belongs to the ATPase gamma chain family. Component of the ATP synthase complex composed at least of ATP5F1A/subunit alpha, ATP5F1B/subunit beta, ATP5MC1/subunit c (homooctomer), MT-ATP6/subunit a, MT-ATP8/subunit 8, ATP5ME/subunit e, ATP5MF/subunit f, ATP5MG/subunit g, ATP5MK/subunit k, ATP5MJ/subunit j, ATP5F1C/subunit gamma, ATP5F1D/subunit delta, ATP5F1E/subunit epsilon, ATP5PF/subunit F6, ATP5PB/subunit b, ATP5PD/subunit d, ATP5PO/subunit OSCP. ATP synthase complex consists of a soluble F(1) head domain (subunits alpha(3) and beta(3)) - the catalytic core - and a membrane F(0) domain - the membrane proton channel (subunits c, a, 8, e, f, g, k and j). These two domains are linked by a central stalk (subunits gamma, delta, and epsilon) rotating inside the F1 region and a stationary peripheral stalk (subunits F6, b, d, and OSCP). Interacts with FLVCR2; this interaction occurs in the absence of heme and is disrupted upon heme binding.

The protein resides in the mitochondrion inner membrane. Functionally, subunit gamma, of the mitochondrial membrane ATP synthase complex (F(1)F(0) ATP synthase or Complex V) that produces ATP from ADP in the presence of a proton gradient across the membrane which is generated by electron transport complexes of the respiratory chain. ATP synthase complex consist of a soluble F(1) head domain - the catalytic core - and a membrane F(1) domain - the membrane proton channel. These two domains are linked by a central stalk rotating inside the F(1) region and a stationary peripheral stalk. During catalysis, ATP synthesis in the catalytic domain of F(1) is coupled via a rotary mechanism of the central stalk subunits to proton translocation. In vivo, can only synthesize ATP although its ATP hydrolase activity can be activated artificially in vitro. With the central stalk subunit delta, is essential for the biogenesis of F(1) catalytic part of the ATP synthase complex namely in the formation of F1 assembly intermediate. This is ATP synthase F(1) complex subunit gamma, mitochondrial from Rattus norvegicus (Rat).